Consider the following 614-residue polypeptide: UvrABC system protein C (614 aa).

In terms of domain architecture, GIY-YIG spans 26–104 (NLPGVYKMLG…IKEYRPPYNV (79 aa)). The region spanning 215–250 (SDIHSALIEKMEASAEELDFEKAVFYRDQLSMLREV) is the UVR domain.

It belongs to the UvrC family. In terms of assembly, interacts with UvrB in an incision complex.

The protein localises to the cytoplasm. In terms of biological role, the UvrABC repair system catalyzes the recognition and processing of DNA lesions. UvrC both incises the 5' and 3' sides of the lesion. The N-terminal half is responsible for the 3' incision and the C-terminal half is responsible for the 5' incision. This chain is UvrABC system protein C, found in Psychrobacter arcticus (strain DSM 17307 / VKM B-2377 / 273-4).